The sequence spans 243 residues: Phosphoadenosine 5'-phosphosulfate reductase (243 aa).

Cys-239 functions as the Nucleophile; cysteine thiosulfonate intermediate in the catalytic mechanism.

The protein belongs to the PAPS reductase family. CysH subfamily.

The protein localises to the cytoplasm. The catalysed reaction is [thioredoxin]-disulfide + sulfite + adenosine 3',5'-bisphosphate + 2 H(+) = [thioredoxin]-dithiol + 3'-phosphoadenylyl sulfate. Its pathway is sulfur metabolism; hydrogen sulfide biosynthesis; sulfite from sulfate: step 3/3. Its function is as follows. Catalyzes the formation of sulfite from phosphoadenosine 5'-phosphosulfate (PAPS) using thioredoxin as an electron donor. In Erwinia tasmaniensis (strain DSM 17950 / CFBP 7177 / CIP 109463 / NCPPB 4357 / Et1/99), this protein is Phosphoadenosine 5'-phosphosulfate reductase.